A 554-amino-acid polypeptide reads, in one-letter code: Carboxypeptidase Y homolog A (554 aa).

Positions 1–17 are cleaved as a signal peptide; sequence MRVAASTVLLGVASAAS. The propeptide occupies 18–137; the sequence is FQQQTQHVLS…KLADFNLRVK (120 aa). Cystine bridges form between C191/C431, C325/C339, C349/C372, C356/C365, and C394/C401. The N-linked (GlcNAc...) asparagine glycan is linked to N222. S278 is a catalytic residue. The active site involves D470. N518 carries N-linked (GlcNAc...) asparagine glycosylation. The active site involves H529.

The protein belongs to the peptidase S10 family.

The protein resides in the vacuole. The catalysed reaction is Release of a C-terminal amino acid with broad specificity.. Functionally, vacuolar carboxypeptidase involved in degradation of small peptides. Digests preferentially peptides containing an aliphatic or hydrophobic residue in P1' position, as well as methionine, leucine or phenylalanine in P1 position of ester substrate. The sequence is that of Carboxypeptidase Y homolog A (CPYA) from Podospora anserina (strain S / ATCC MYA-4624 / DSM 980 / FGSC 10383) (Pleurage anserina).